Reading from the N-terminus, the 595-residue chain is Alpha-1,3-galactosidase B (595 aa).

The first 22 residues, 1–22 (MKTILLFALSLLLSLSVSDVCA), serve as a signal peptide directing secretion. PbH1 repeat units lie at residues 432 to 454 (TPEV…LFST), 455 to 477 (PKKT…LLCG), and 488 to 541 (CRDV…VIED).

It belongs to the glycosyl hydrolase 110 family. B subfamily.

It catalyses the reaction Hydrolysis of terminal, non-reducing branched (1-&gt;3)-alpha-D-galactosidic residues, producing free D-galactose.. It carries out the reaction Hydrolysis of terminal, non-reducing linear (1-&gt;3)-alpha-D-galactosidic residues, producing free D-galactose.. The enzyme catalyses Hydrolysis of terminal, non-reducing alpha-D-galactose residues in alpha-D-galactosides, including galactose oligosaccharides, galactomannans and galactolipids.. Alpha-galactosidase. Removes both branched alpha-1,3-linked galactose residues of blood group B antigens and linear alpha-1,3-linked galactose structures. The protein is Alpha-1,3-galactosidase B (glaB) of Bacteroides fragilis (strain YCH46).